The sequence spans 273 residues: 2,3,4,5-tetrahydropyridine-2,6-dicarboxylate N-succinyltransferase (273 aa).

Arginine 105 and aspartate 142 together coordinate substrate.

It belongs to the transferase hexapeptide repeat family. In terms of assembly, homotrimer.

The protein localises to the cytoplasm. The catalysed reaction is (S)-2,3,4,5-tetrahydrodipicolinate + succinyl-CoA + H2O = (S)-2-succinylamino-6-oxoheptanedioate + CoA. The protein operates within amino-acid biosynthesis; L-lysine biosynthesis via DAP pathway; LL-2,6-diaminopimelate from (S)-tetrahydrodipicolinate (succinylase route): step 1/3. This is 2,3,4,5-tetrahydropyridine-2,6-dicarboxylate N-succinyltransferase from Bordetella avium (strain 197N).